Reading from the N-terminus, the 458-residue chain is MENRYAIILAAGKGTRMKSKLYKVLHPVAGKPMVEHILDQVEQTEPTEIVTIVGHGAEMIKSHLGERSQYALQAEQLGTGHAVMQAQELLGGKQGTTLVITGDTPLLTAETLKNLFDYHQGKNASATILTAHAEDPTGYGRIIRDHVGIVERIVEQKDASEEEARVQEINTGTFCFDNESLFEALAKTDTNNTQGEYYLTDIIEILKKEGKAVAAYQMADFDEAMGVNDRVALSTANKIMHRRLNEMHMRNGVTFIDPDTTYIDEGVVIGSDTVIEAGVTIKGKTVIGEDCLIGAHSEIVDSHIGNQVVVKQSVIEESVVHEGADVGPYAHLRPKADVGANVHIGNFVEVKNATIDEGTKVGHLTYVGDATLGKDINVGCGVVFVNYDGKNKHQTIVGDHAFIGSATNIVAPVTIGDHAVTAAGSTITEDVPSEDLAIARARQVNKEGYAKKLPYMKD.

The segment at 1–230 (MENRYAIILA…FDEAMGVNDR (230 aa)) is pyrophosphorylase. Residues 9-12 (LAAG), Lys-23, Gln-73, and 78-79 (GT) contribute to the UDP-N-acetyl-alpha-D-glucosamine site. Position 103 (Asp-103) interacts with Mg(2+). UDP-N-acetyl-alpha-D-glucosamine is bound by residues Gly-140, Glu-155, Asn-170, and Asn-228. Asn-228 lines the Mg(2+) pocket. Residues 231-251 (VALSTANKIMHRRLNEMHMRN) form a linker region. Positions 252–458 (GVTFIDPDTT…YAKKLPYMKD (207 aa)) are N-acetyltransferase. Positions 333 and 351 each coordinate UDP-N-acetyl-alpha-D-glucosamine. His-363 serves as the catalytic Proton acceptor. 2 residues coordinate UDP-N-acetyl-alpha-D-glucosamine: Tyr-366 and Asn-377. Acetyl-CoA-binding positions include 386–387 (NY), Ser-405, Ala-423, and Arg-440.

It in the N-terminal section; belongs to the N-acetylglucosamine-1-phosphate uridyltransferase family. This sequence in the C-terminal section; belongs to the transferase hexapeptide repeat family. In terms of assembly, homotrimer. The cofactor is Mg(2+).

Its subcellular location is the cytoplasm. It catalyses the reaction alpha-D-glucosamine 1-phosphate + acetyl-CoA = N-acetyl-alpha-D-glucosamine 1-phosphate + CoA + H(+). The enzyme catalyses N-acetyl-alpha-D-glucosamine 1-phosphate + UTP + H(+) = UDP-N-acetyl-alpha-D-glucosamine + diphosphate. It functions in the pathway nucleotide-sugar biosynthesis; UDP-N-acetyl-alpha-D-glucosamine biosynthesis; N-acetyl-alpha-D-glucosamine 1-phosphate from alpha-D-glucosamine 6-phosphate (route II): step 2/2. The protein operates within nucleotide-sugar biosynthesis; UDP-N-acetyl-alpha-D-glucosamine biosynthesis; UDP-N-acetyl-alpha-D-glucosamine from N-acetyl-alpha-D-glucosamine 1-phosphate: step 1/1. Its pathway is bacterial outer membrane biogenesis; LPS lipid A biosynthesis. Functionally, catalyzes the last two sequential reactions in the de novo biosynthetic pathway for UDP-N-acetylglucosamine (UDP-GlcNAc). The C-terminal domain catalyzes the transfer of acetyl group from acetyl coenzyme A to glucosamine-1-phosphate (GlcN-1-P) to produce N-acetylglucosamine-1-phosphate (GlcNAc-1-P), which is converted into UDP-GlcNAc by the transfer of uridine 5-monophosphate (from uridine 5-triphosphate), a reaction catalyzed by the N-terminal domain. In Enterococcus faecalis (strain ATCC 700802 / V583), this protein is Bifunctional protein GlmU.